The chain runs to 60 residues: UPF0434 protein YcaR (60 aa).

It belongs to the UPF0434 family.

This Escherichia fergusonii (strain ATCC 35469 / DSM 13698 / CCUG 18766 / IAM 14443 / JCM 21226 / LMG 7866 / NBRC 102419 / NCTC 12128 / CDC 0568-73) protein is UPF0434 protein YcaR.